A 405-amino-acid chain; its full sequence is Terpene cyclase pbrA (405 aa).

The Mg(2+) site is built by Asp-103, Glu-168, Asn-229, Ser-233, Glu-237, and Asp-241. A D(D/E)XX(D/E) motif motif is present at residues 103–108; sequence DDEISS. The NSE motif motif lies at 227–237; the sequence is LVNDLFSFYKE. Positions 316–323 match the WxxxxxRY motif motif; it reads EDLGGSSA.

Belongs to the trichodiene synthase family. It depends on Mg(2+) as a cofactor.

It functions in the pathway secondary metabolite biosynthesis; terpenoid biosynthesis. Terpene cyclase; part of the gene cluster that mediates the biosynthesis of the sesquiterpenoid aspterric acid (AA), an inhibitor of dihydroxy-acid dehydratase (DHAD) effective as an herbicide. PbrA cyclizes farnesyl diphosphate (FPP) to produce (-)-daucane. The cytochrome P450 monooxygenase pbrBB then converts (-)-daucane into the alpha-epoxy carboxylate intermediate which is further converted into the tricyclic aspterric acid by the cytochrome P450 monooxygenase pbrC. The protein is Terpene cyclase pbrA of Penicillium brasilianum.